The chain runs to 227 residues: DNA repair protein RecO (227 aa).

This sequence belongs to the RecO family.

In terms of biological role, involved in DNA repair and RecF pathway recombination. This chain is DNA repair protein RecO, found in Pseudomonas putida (strain ATCC 47054 / DSM 6125 / CFBP 8728 / NCIMB 11950 / KT2440).